A 475-amino-acid chain; its full sequence is Doublecortin domain-containing protein 2 (475 aa).

2 consecutive Doublecortin domains span residues lysine 17–leucine 100 and cysteine 139–serine 221. Residues tyrosine 234 to alanine 475 are disordered. Residues glycine 252 to glutamine 272 are compositionally biased toward polar residues. The residue at position 270 (serine 270) is a Phosphoserine. The segment covering glutamate 353–phenylalanine 365 has biased composition (basic and acidic residues). The segment covering threonine 407 to threonine 419 has biased composition (acidic residues). Residues threonine 455–alanine 475 show a composition bias toward polar residues.

Interacts with DVL1, DVL2 and DVL3. Expressed in hair cells of the inner ear.

Its subcellular location is the cell projection. The protein resides in the cilium. The protein localises to the cytoplasm. It localises to the cytoskeleton. It is found in the cilium axoneme. Its subcellular location is the kinocilium. Functionally, protein that plays a role in the inhibition of canonical Wnt signaling pathway. May be involved in neuronal migration during development of the cerebral neocortex. Involved in the control of ciliogenesis and ciliary length. In Rattus norvegicus (Rat), this protein is Doublecortin domain-containing protein 2 (Dcdc2).